The following is a 366-amino-acid chain: GTPase Obg (366 aa).

The region spanning 1–161 is the Obg domain; that stretch reads MRFVDEARIQ…FNLRLELKIL (161 aa). The segment at 121-148 is disordered; that stretch reads SGGRGGKGNEHFKSSTMRAPRFSQPGEP. An OBG-type G domain is found at 162-334; it reads ADAGLIGLPN…LVQELWQVCE (173 aa). GTP-binding positions include 168–175, 193–197, 217–220, 287–290, and 315–317; these read GLPNAGKS, FTTLT, DIPG, NKID, and SAR. Mg(2+)-binding residues include serine 175 and threonine 195.

Belongs to the TRAFAC class OBG-HflX-like GTPase superfamily. OBG GTPase family. As to quaternary structure, monomer. The cofactor is Mg(2+).

The protein resides in the cytoplasm. An essential GTPase which binds GTP, GDP and possibly (p)ppGpp with moderate affinity, with high nucleotide exchange rates and a fairly low GTP hydrolysis rate. Plays a role in control of the cell cycle, stress response, ribosome biogenesis and in those bacteria that undergo differentiation, in morphogenesis control. The polypeptide is GTPase Obg (Desulfovibrio desulfuricans (strain ATCC 27774 / DSM 6949 / MB)).